The chain runs to 198 residues: Putative 3-methyladenine DNA glycosylase (198 aa).

This sequence belongs to the DNA glycosylase MPG family.

This Oceanobacillus iheyensis (strain DSM 14371 / CIP 107618 / JCM 11309 / KCTC 3954 / HTE831) protein is Putative 3-methyladenine DNA glycosylase.